Consider the following 196-residue polypeptide: SAGA-associated factor 11 homolog (196 aa).

The segment at 1-22 (MSAANMPTTTGAQGSGNQVPTT) is disordered. The SGF11-type zinc finger occupies 106 to 127 (CTCPNCDRLVAAARFAPHLEKC). The interval 141-196 (RLATKEGATSAHLHSSGNTGGTDDEDDVDWSSDKRRKKSNQNSRNNGSKKNNGKTF) is disordered. Residue serine 172 is modified to Phosphoserine. Residues 180 to 196 (NQNSRNNGSKKNNGKTF) show a composition bias toward low complexity.

The protein belongs to the SGF11 family. In terms of assembly, component of some SAGA transcription coactivator-HAT complexes, at least composed of Ada2b, not/nonstop, Pcaf/Gcn5, Sgf11 and Spt3. Within the SAGA complex, Sgf11, e(y)2, and not/nonstop form an additional subcomplex of SAGA called the DUB module (deubiquitination module). Interacts directly with not/nonstop. Interacts with the AMEX complex component xmas-2. Interacts with Cbp80; important for promoter recruitment of Sgf11 that is not associated with the DUB module.

It is found in the nucleus. It localises to the nucleoplasm. The protein localises to the cytoplasm. Its function is as follows. Component of the transcription regulatory histone acetylation (HAT) complex SAGA, a multiprotein complex that activates transcription by remodeling chromatin and mediating histone acetylation and deubiquitination. Within the SAGA complex, participates in a subcomplex that specifically deubiquitinates histone H2B. The SAGA complex is recruited to specific gene promoters by activators, where it is required for transcription. Required for nuclear receptor-mediated transactivation. Binds independently on SAGA to promoters in an RNA-dependent manner. Binds to mRNA and is essential for total mRNA export from the nucleus. Required to counteract heterochromatin silencing. Controls the development of neuronal connectivity in visual system by being required for accurate axon targeting in the optic lobe. Required for expression of ecdysone-induced genes such as br/broad. This chain is SAGA-associated factor 11 homolog, found in Drosophila simulans (Fruit fly).